A 375-amino-acid polypeptide reads, in one-letter code: 23S rRNA (uracil(747)-C(5))-methyltransferase RlmC (375 aa).

C3, C11, C14, and C87 together coordinate [4Fe-4S] cluster. S-adenosyl-L-methionine-binding residues include Q212, F241, E262, and N307. The active-site Nucleophile is C334.

This sequence belongs to the class I-like SAM-binding methyltransferase superfamily. RNA M5U methyltransferase family. RlmC subfamily.

It carries out the reaction uridine(747) in 23S rRNA + S-adenosyl-L-methionine = 5-methyluridine(747) in 23S rRNA + S-adenosyl-L-homocysteine + H(+). In terms of biological role, catalyzes the formation of 5-methyl-uridine at position 747 (m5U747) in 23S rRNA. This is 23S rRNA (uracil(747)-C(5))-methyltransferase RlmC from Shigella boydii serotype 18 (strain CDC 3083-94 / BS512).